The sequence spans 740 residues: Probable type IV piliation system protein DR_0774 (740 aa).

An N-terminal signal peptide occupies residues 1 to 20 (MNKRHALLLTAVLGMATAYA).

Belongs to the bacterial secretin family.

The protein localises to the cell envelope. Could be part of the type IV piliation system (T4P). May contribute at the cohesion between the S-layer and the outer membrane by forming oligomers. Could also be the main channel through which trafficking is managed. This chain is Probable type IV piliation system protein DR_0774, found in Deinococcus radiodurans (strain ATCC 13939 / DSM 20539 / JCM 16871 / CCUG 27074 / LMG 4051 / NBRC 15346 / NCIMB 9279 / VKM B-1422 / R1).